Here is a 532-residue protein sequence, read N- to C-terminus: BTB/POZ domain-containing protein 3 (532 aa).

Residues 23–54 are disordered; sequence KNRSKKSSKKTNTGGGGGGSSSSSSSSSNSKL. A compositionally biased stretch (low complexity) spans 43-53; the sequence is SSSSSSSSNSK. A BTB domain is found at 130-200; sequence ADVHFVVGPP…IYCDEIDLAA (71 aa). Residues 245 to 310 enclose the BACK domain; the sequence is FEEPDLTQRC…NWAEVECQRQ (66 aa).

In terms of tissue distribution, expressed in visual cortex. Expressed in visual cortex layer IV neurons.

It is found in the cytoplasm. It localises to the cytosol. The protein localises to the nucleus. Functionally, acts as a key regulator of dendritic field orientation during development of sensory cortex. Also directs dendrites toward active axon terminals when ectopically expressed. The protein is BTB/POZ domain-containing protein 3 (BTBD3) of Mustela putorius furo (European domestic ferret).